A 209-amino-acid polypeptide reads, in one-letter code: Probable calcium-binding protein CML36 (209 aa).

Positions 22–59 (SKSPTAFSFGSASSSSGQDCKNSGGDGGGGSVTPTSIL) are disordered. A compositionally biased stretch (low complexity) spans 27 to 38 (AFSFGSASSSSG). 4 EF-hand domains span residues 66 to 101 (YSYVEILQAFKLIDRDNDGAVSRHDLESLLSRLGPD), 103 to 138 (LTEEEINVMLKEVDCDGDGTIRLEELASRVVSLDPA), 139 to 174 (RDSTELKETFEFFDADRDGLISADELLRVFSTIGDE), and 176 to 209 (CTLDDCKRMIADVDEDGDGFVCFTEFSRMMDLQR). Residues Asp-79, Asp-81, Asp-83, and Asp-90 each coordinate Ca(2+). Ca(2+) is bound by residues Asp-152, Asp-154, Asp-156, Glu-163, Asp-189, Asp-191, Asp-193, and Glu-200.

Potential calcium sensor. The chain is Probable calcium-binding protein CML36 (CML36) from Arabidopsis thaliana (Mouse-ear cress).